A 547-amino-acid chain; its full sequence is Phosphomethylpyrimidine synthase (547 aa).

Substrate-binding positions include N146, M175, Y204, H240, 260 to 262 (SRG), 301 to 304 (DGLR), and E340. Position 344 (H344) interacts with Zn(2+). Y367 is a binding site for substrate. H408 is a binding site for Zn(2+). Residues C488, C491, and C496 each coordinate [4Fe-4S] cluster.

The protein belongs to the ThiC family. The cofactor is [4Fe-4S] cluster.

It catalyses the reaction 5-amino-1-(5-phospho-beta-D-ribosyl)imidazole + S-adenosyl-L-methionine = 4-amino-2-methyl-5-(phosphooxymethyl)pyrimidine + CO + 5'-deoxyadenosine + formate + L-methionine + 3 H(+). Its pathway is cofactor biosynthesis; thiamine diphosphate biosynthesis. Functionally, catalyzes the synthesis of the hydroxymethylpyrimidine phosphate (HMP-P) moiety of thiamine from aminoimidazole ribotide (AIR) in a radical S-adenosyl-L-methionine (SAM)-dependent reaction. The protein is Phosphomethylpyrimidine synthase of Mycobacterium bovis (strain ATCC BAA-935 / AF2122/97).